The following is an 811-amino-acid chain: MSSLLSFYRNILNFPLSLLVKSQAIPTDPVSELGLNLEQPIIYVLPYTSQTDLLILQKNCLALNLPDPLVENDIQGQSLPRYVFLDEGHRFFKSKGVKSETESLFYRYLDLHKTDETLDVQLVPVSVLWGRSPGKETAPSLRLLSRFQRIIAMIWFGRDNFVRFSQAVSLCYMVKEYGAEKGIAQKLARVAKIHFAKQRYSAMGPRLPERQAMFDKLIQLPTIVQAIEDEAKTKKIPIPKARQEAEKILDEIAADVSHGTLRMADRVLSWLWNKLYQGINVQNADRVRKLALEGHEIIYVPCHRSHMDYLLLSYILYHQGVVPPHIAAGINLNFWPAGPFFRRGGAFFIRRTFKGNRLYSTVFREYLAELFYRGYSVEYFIEGGRSRTGRLLEPKTGMVSMTLQALQRGLNRPISIVPVYIGYEHVLEVDTYAKELRGAAKEKENAELVLRVIKKLRNLGQGYVNFGKPIQVNSYLNQHFPEWKLPPVENVRPKWLNEAVDAIAKQVMVNINNAAAVNAKNLIGSVLLASRQRALSREQLIEQVESYLQLFQNVSYSSDIILPTESADEMLEHVLALPRSGVMSEKDNFGEMIRLDRESAVLMTYYRNNIQHLFVLPSLVASIVLHNEAASKTLIRETVSHIYPFLKAELFLHFDEKEVLEQVELILTEFIRQQIVKYDGDVLTINRRRLPTLQLHAAGIREILQRYYISLSLLLECPAISRTLLEKESRMIAQRLSILHGINAPEFFDKAIFSTFTASLKAQGYFDLEGHTVIEKVEEVAHILRRLISVEVQLTIQGAMDKVDQIDEKLE.

The HXXXXD motif motif lies at 303 to 308; sequence HRSHMD.

Belongs to the GPAT/DAPAT family.

The protein resides in the cell inner membrane. It carries out the reaction sn-glycerol 3-phosphate + an acyl-CoA = a 1-acyl-sn-glycero-3-phosphate + CoA. It functions in the pathway phospholipid metabolism; CDP-diacylglycerol biosynthesis; CDP-diacylglycerol from sn-glycerol 3-phosphate: step 1/3. The polypeptide is Glycerol-3-phosphate acyltransferase (Haemophilus ducreyi (strain 35000HP / ATCC 700724)).